Here is a 347-residue protein sequence, read N- to C-terminus: Mitochondrial glycine transporter (347 aa).

Solcar repeat units follow at residues 18–102 (SKPT…LRTA), 138–222 (LSHT…SKRS), and 247–331 (STAS…LIMW). 6 helical membrane-spanning segments follow: residues 24–49 (FAAGLLSGLTSSILLQPADLLKTRVQ), 77–103 (GTLPSALRTGFGSALYFTSLNTLRTAV), 144–169 (LITGAVARVAAGFVMMPVTVLKVRYE), 197–220 (GFGATAIRDAPYAGLYVVFYEQSK), 251–277 (INFISGALAAGLATTITNPFDVVKTRV), and 306–324 (GLGLRMGRKALSSALAWTV).

The protein belongs to the mitochondrial carrier (TC 2.A.29) family. SLC25A38 subfamily.

The protein localises to the mitochondrion inner membrane. The catalysed reaction is glycine(in) = glycine(out). Mitochondrial glycine transporter that imports glycine into the mitochondrial matrix. Plays an important role in providing glycine for the first enzymatic step in heme biosynthesis, the condensation of glycine with succinyl-CoA to produce 5-aminolevulinate (ALA) in the mitochondrial matrix. The sequence is that of Mitochondrial glycine transporter from Coccidioides immitis (strain RS) (Valley fever fungus).